Reading from the N-terminus, the 420-residue chain is Vasopressin V1a receptor (420 aa).

Residues 1–20 form a disordered region; that stretch reads MSFPRGSYDPAASNSSPWWP. At 1–54 the chain is on the extracellular side; the sequence is MSFPRGSYDPAASNSSPWWPLSAEDANSSWEAAGHQKGSDPSGDVRNEELAKLE. N-linked (GlcNAc...) asparagine glycosylation is present at Asn-27. A helical membrane pass occupies residues 55–75; it reads IAVLAVIFVVAVLGNSSVLLA. Residues 76–92 are Cytoplasmic-facing; it reads LHRTPRKTSRMHLFIRH. The chain crosses the membrane as a helical span at residues 93-113; that stretch reads LSLADLAVAFFQVLPQLCWDI. Over 114–125 the chain is Extracellular; that stretch reads TYRFRGPDWLCR. A disulfide bridge connects residues Cys-124 and Cys-205. Residues 126–146 form a helical membrane-spanning segment; that stretch reads VVKHLQVFAMFASAYMLVVMT. Residues 147-168 are Cytoplasmic-facing; it reads ADRYIAVCHPLKTLQQPTRRSR. Residues 169-189 form a helical membrane-spanning segment; sequence LMIAASWVLSFLLSTPQYFIF. At 190 to 225 the chain is on the extracellular side; sequence SMIEIEVNNGTKTQDCWATFIQPWGTRAYVTWMTSG. Residue Asn-198 is glycosylated (N-linked (GlcNAc...) asparagine). A helical membrane pass occupies residues 226–246; it reads VFVVPVVILGTCYGFICYHIW. At 247 to 294 the chain is on the cytoplasmic side; the sequence is RNVRGKTASRQSKGSGEDVAPFHKGLLVTPCVSSVKTISRAKIRTVKM. The chain crosses the membrane as a helical span at residues 295 to 315; sequence TFVIVTAYILCWAPFFIVQMW. Residues 316–331 are Extracellular-facing; sequence SVWDDNFIWTDSENPS. The helical transmembrane segment at 332-352 threads the bilayer; sequence ITITALLASLNSCCNPWIYMF. Topologically, residues 353–420 are cytoplasmic; the sequence is FSGHLLQDCV…RSIRFIPVST (68 aa). Residues Cys-367 and Cys-368 are each lipidated (S-palmitoyl cysteine). The segment at 379–411 is disordered; that stretch reads DSDNMSRRHTSYSNNRSPTNSTGTWKDSPKSSR. Polar residues predominate over residues 389-403; that stretch reads SYSNNRSPTNSTGTW. Phosphoserine is present on Ser-406.

It belongs to the G-protein coupled receptor 1 family. Vasopressin/oxytocin receptor subfamily.

It is found in the cell membrane. Its function is as follows. Receptor for arginine vasopressin. The activity of this receptor is mediated by G proteins which activate a phosphatidyl-inositol-calcium second messenger system. Involved in social memory formation. This Microtus ochrogaster (Prairie vole) protein is Vasopressin V1a receptor (Avpr1a).